The primary structure comprises 138 residues: Large ribosomal subunit protein uL16 (138 aa).

The segment covering M1–G15 has biased composition (basic residues). The interval M1–A21 is disordered.

It belongs to the universal ribosomal protein uL16 family. As to quaternary structure, part of the 50S ribosomal subunit.

In terms of biological role, binds 23S rRNA and is also seen to make contacts with the A and possibly P site tRNAs. This is Large ribosomal subunit protein uL16 from Borrelia recurrentis (strain A1).